Consider the following 188-residue polypeptide: Ribosomal RNA small subunit methyltransferase G (188 aa).

S-adenosyl-L-methionine contacts are provided by residues Gly69, Phe74, 119–120 (VQ), and Arg134.

This sequence belongs to the methyltransferase superfamily. RNA methyltransferase RsmG family.

It is found in the cytoplasm. The enzyme catalyses guanosine(527) in 16S rRNA + S-adenosyl-L-methionine = N(7)-methylguanosine(527) in 16S rRNA + S-adenosyl-L-homocysteine. Its function is as follows. Specifically methylates the N7 position of guanine in position 527 of 16S rRNA. In Campylobacter jejuni subsp. doylei (strain ATCC BAA-1458 / RM4099 / 269.97), this protein is Ribosomal RNA small subunit methyltransferase G.